Consider the following 404-residue polypeptide: Argininosuccinate synthase (404 aa).

ATP is bound by residues 9-17 (AYSGGLDTS) and alanine 36. Tyrosine 87 contributes to the L-citrulline binding site. Position 117 (glycine 117) interacts with ATP. L-aspartate is bound by residues threonine 119, asparagine 123, and aspartate 124. Asparagine 123 serves as a coordination point for L-citrulline. Residues arginine 127, serine 176, and glutamate 261 each coordinate L-citrulline.

The protein belongs to the argininosuccinate synthase family. Type 1 subfamily. As to quaternary structure, homotetramer.

It localises to the cytoplasm. The catalysed reaction is L-citrulline + L-aspartate + ATP = 2-(N(omega)-L-arginino)succinate + AMP + diphosphate + H(+). It participates in amino-acid biosynthesis; L-arginine biosynthesis; L-arginine from L-ornithine and carbamoyl phosphate: step 2/3. In Burkholderia pseudomallei (strain K96243), this protein is Argininosuccinate synthase.